Reading from the N-terminus, the 122-residue chain is MIQMQTNLDVADNSGARRVMCIKVLGGSKRKYAHVGDIIVVSVKEAIPRGRVKKGDVMKAVVVRTAKDIRRVDGSVIRFDRNAAVLINNNKEPVGTRIFGPVPRELRAKNHMKIISLAPEVL.

This sequence belongs to the universal ribosomal protein uL14 family. Part of the 50S ribosomal subunit. Forms a cluster with proteins L3 and L19. In the 70S ribosome, L14 and L19 interact and together make contacts with the 16S rRNA in bridges B5 and B8.

Its function is as follows. Binds to 23S rRNA. Forms part of two intersubunit bridges in the 70S ribosome. The protein is Large ribosomal subunit protein uL14 of Azorhizobium caulinodans (strain ATCC 43989 / DSM 5975 / JCM 20966 / LMG 6465 / NBRC 14845 / NCIMB 13405 / ORS 571).